Here is a 179-residue protein sequence, read N- to C-terminus: MSVLAEQYKEEIVPKLMDKFDYENIMAVPRVEKVVVNVGMGELKEDPKLIDVVVNDIASITGQKPVITRAKKSVANFKIREGMPIGAKVTLRGETMYEFLYKLVNVTLPRIRDFRGVSPKSFDGRGNYNIGIREHIVFPEIEIDKVDKVYGLEITIVTSAETDEEAYELLKLMGMPFNQ.

This sequence belongs to the universal ribosomal protein uL5 family. Part of the 50S ribosomal subunit; part of the 5S rRNA/L5/L18/L25 subcomplex. Contacts the 5S rRNA and the P site tRNA. Forms a bridge to the 30S subunit in the 70S ribosome.

Its function is as follows. This is one of the proteins that bind and probably mediate the attachment of the 5S RNA into the large ribosomal subunit, where it forms part of the central protuberance. In the 70S ribosome it contacts protein S13 of the 30S subunit (bridge B1b), connecting the 2 subunits; this bridge is implicated in subunit movement. Contacts the P site tRNA; the 5S rRNA and some of its associated proteins might help stabilize positioning of ribosome-bound tRNAs. This is Large ribosomal subunit protein uL5 from Halothermothrix orenii (strain H 168 / OCM 544 / DSM 9562).